Here is a 149-residue protein sequence, read N- to C-terminus: METLYRVPFLVLECPNLKLKKPPWLHMPSAMTVYALVVVSYFLITGGIIYDVIVEPPSVGSMTDEHGHQRPVAFLAYRVNGQYIMEGLASSFLFTMGGLGFIILDRSNAPNIPKLNRFLLLFIGFVCVLLSFFMARVFMRMKLPGYLMG.

Over 1–32 (METLYRVPFLVLECPNLKLKKPPWLHMPSAMT) the chain is Cytoplasmic. Residues 33 to 53 (VYALVVVSYFLITGGIIYDVI) form a helical membrane-spanning segment. Residues 54–83 (VEPPSVGSMTDEHGHQRPVAFLAYRVNGQY) are Extracellular-facing. The helical transmembrane segment at 84–104 (IMEGLASSFLFTMGGLGFIIL) threads the bilayer. At 105–117 (DRSNAPNIPKLNR) the chain is on the cytoplasmic side. Residues 118–138 (FLLLFIGFVCVLLSFFMARVF) form a helical membrane-spanning segment. At 139–149 (MRMKLPGYLMG) the chain is on the extracellular side.

The protein belongs to the OSTC family. In terms of assembly, component of STT3A-containing oligosaccharyl transferase (OST-A) complex. STT3A-containing complex assembly occurs through the formation of 3 subcomplexes. Subcomplex 1 contains RPN1 and TMEM258, subcomplex 2 contains the STT3A-specific subunits STT3A, DC2/OSTC, and KCP2 as well as the core subunit OST4, and subcomplex 3 contains RPN2, DAD1, and OST48. The OST-A complex can form stable complexes with the Sec61 complex or with both the Sec61 and TRAP complexes. Interacts with PSEN1 and NCSTN; indicative for an association with the gamma-secretase complex.

The protein resides in the endoplasmic reticulum. It is found in the membrane. The protein operates within protein modification; protein glycosylation. Subunit of STT3A-containing oligosaccharyl transferase (OST-A) complex that catalyzes the initial transfer of a defined glycan (Glc(3)Man(9)GlcNAc(2) in eukaryotes) from the lipid carrier dolichol-pyrophosphate to an asparagine residue within an Asn-X-Ser/Thr consensus motif in nascent polypeptide chains, the first step in protein N-glycosylation. N-glycosylation occurs cotranslationally and the complex associates with the Sec61 complex at the channel-forming translocon complex that mediates protein translocation across the endoplasmic reticulum (ER). Within the OST-A complex, acts as an adapter that anchors the OST-A complex to the Sec61 complex. May be involved in N-glycosylation of APP (amyloid-beta precursor protein). Can modulate gamma-secretase cleavage of APP by enhancing endoprotelysis of PSEN1. The chain is Oligosaccharyltransferase complex subunit OSTC from Homo sapiens (Human).